An 853-amino-acid chain; its full sequence is DNA topoisomerase 1 (853 aa).

Positions 3–136 (KSLVIVESPV…KFRRVVFNEI (134 aa)) constitute a Toprim domain. Residues E9 and D105 each contribute to the Mg(2+) site. The 414-residue stretch at 152-565 (NMNRVYSQQA…SFFDNFSQQL (414 aa)) folds into the Topo IA-type catalytic domain. The interaction with DNA stretch occupies residues 186–191 (SAGRVQ). Residue Y313 is the O-(5'-phospho-DNA)-tyrosine intermediate of the active site. 3 consecutive C4-type zinc fingers follow at residues 589 to 621 (CSLC…EKRC), 649 to 676 (CKKC…NPSC), and 699 to 724 (CEKC…NDTC).

Belongs to the type IA topoisomerase family. In terms of assembly, monomer. Requires Mg(2+) as cofactor.

The catalysed reaction is ATP-independent breakage of single-stranded DNA, followed by passage and rejoining.. Releases the supercoiling and torsional tension of DNA, which is introduced during the DNA replication and transcription, by transiently cleaving and rejoining one strand of the DNA duplex. Introduces a single-strand break via transesterification at a target site in duplex DNA. The scissile phosphodiester is attacked by the catalytic tyrosine of the enzyme, resulting in the formation of a DNA-(5'-phosphotyrosyl)-enzyme intermediate and the expulsion of a 3'-OH DNA strand. The free DNA strand then undergoes passage around the unbroken strand, thus removing DNA supercoils. Finally, in the religation step, the DNA 3'-OH attacks the covalent intermediate to expel the active-site tyrosine and restore the DNA phosphodiester backbone. In Buchnera aphidicola subsp. Schizaphis graminum (strain Sg), this protein is DNA topoisomerase 1.